Consider the following 842-residue polypeptide: Type VI secretion system spike protein VgrG2a (842 aa).

Positions 265–291 (RSGAGRPFSESRLRGHRRDARVASVSG) are disordered.

The protein belongs to the VgrG protein family.

Functionally, part of the H2 type VI secretion system (H2-T6SS) specialized secretion system, which delivers several virulence factors in both prokaryotic and eukaryotic cells during infection. May form the spike at the tip of the elongating tube formed by haemolysin co-regulated protein 2a/Hcp2a. In turn, may allow the delivery of the Tle4 antibacterial toxin to target cells where it exerts its toxicity. Also promotes the release of VgrG2b toxin to the host cell. This is Type VI secretion system spike protein VgrG2a from Pseudomonas aeruginosa (strain ATCC 15692 / DSM 22644 / CIP 104116 / JCM 14847 / LMG 12228 / 1C / PRS 101 / PAO1).